The sequence spans 40 residues: Neutral phospholipase A2 homolog cannitoxin beta chain 2 (40 aa).

In terms of assembly, heterotrimer of alpha, beta, and gamma chains; non-covalently linked. In terms of tissue distribution, expressed by the venom gland.

The protein localises to the secreted. Functionally, heterotrimer: Snake venom phospholipase A2 (PLA2) heterotrimer that acts as a potent presynaptic neurotoxin by blocking synaptic transmission and synaptic vesicle recycling. Enzymatic activity is essential for the neurotoxic effects. May act by binding in a calcium-dependent fashion to neurotonal pentraxin-1 (NPTX1) and neurotonal pentraxin-2 (NPTX2), but not to neuronal pentraxin receptor (NPTXR). Also binds to taipoxin-associated calcium binding protein 49 (RCN2), a protein localized in the lumen of endoplasmic reticulum. Its function is as follows. Monomer (beta chain): Snake venom phospholipase A2 homolog that is neither toxic nor enzymatically active. Does not bind calcium. The sequence is that of Neutral phospholipase A2 homolog cannitoxin beta chain 2 from Oxyuranus scutellatus canni (Papuan taipan).